A 148-amino-acid chain; its full sequence is Sec-independent protein translocase protein TatB (148 aa).

Residues 1-21 (MFGISFSELLLVGLVALLVLG) traverse the membrane as a helical segment. Residues 85–148 (EPTPVEHVGE…NDTTQPPRAP (64 aa)) form a disordered region. A compositionally biased stretch (low complexity) spans 107–148 (APAVAPTESAPVVAPASVEHVAQTAAPTTPAPNDTTQPPRAP).

It belongs to the TatB family. The Tat system comprises two distinct complexes: a TatABC complex, containing multiple copies of TatA, TatB and TatC subunits, and a separate TatA complex, containing only TatA subunits. Substrates initially bind to the TatABC complex, which probably triggers association of the separate TatA complex to form the active translocon.

The protein localises to the cell inner membrane. Its function is as follows. Part of the twin-arginine translocation (Tat) system that transports large folded proteins containing a characteristic twin-arginine motif in their signal peptide across membranes. Together with TatC, TatB is part of a receptor directly interacting with Tat signal peptides. TatB may form an oligomeric binding site that transiently accommodates folded Tat precursor proteins before their translocation. This Pseudomonas fluorescens (strain Pf0-1) protein is Sec-independent protein translocase protein TatB.